Consider the following 155-residue polypeptide: SsrA-binding protein (155 aa).

It belongs to the SmpB family.

The protein resides in the cytoplasm. Functionally, required for rescue of stalled ribosomes mediated by trans-translation. Binds to transfer-messenger RNA (tmRNA), required for stable association of tmRNA with ribosomes. tmRNA and SmpB together mimic tRNA shape, replacing the anticodon stem-loop with SmpB. tmRNA is encoded by the ssrA gene; the 2 termini fold to resemble tRNA(Ala) and it encodes a 'tag peptide', a short internal open reading frame. During trans-translation Ala-aminoacylated tmRNA acts like a tRNA, entering the A-site of stalled ribosomes, displacing the stalled mRNA. The ribosome then switches to translate the ORF on the tmRNA; the nascent peptide is terminated with the 'tag peptide' encoded by the tmRNA and targeted for degradation. The ribosome is freed to recommence translation, which seems to be the essential function of trans-translation. The chain is SsrA-binding protein from Lactococcus lactis subsp. lactis (strain IL1403) (Streptococcus lactis).